Reading from the N-terminus, the 273-residue chain is 4-hydroxy-tetrahydrodipicolinate reductase (273 aa).

Residues 12-17 (GAGGRM) and Glu38 contribute to the NAD(+) site. Arg39 contributes to the NADP(+) binding site. Residues 102–104 (GTT) and 126–129 (AANF) each bind NAD(+). His159 functions as the Proton donor/acceptor in the catalytic mechanism. Position 160 (His160) interacts with (S)-2,3,4,5-tetrahydrodipicolinate. The Proton donor role is filled by Lys163. 169-170 (GT) provides a ligand contact to (S)-2,3,4,5-tetrahydrodipicolinate.

This sequence belongs to the DapB family. As to quaternary structure, homotetramer.

It is found in the cytoplasm. It carries out the reaction (S)-2,3,4,5-tetrahydrodipicolinate + NAD(+) + H2O = (2S,4S)-4-hydroxy-2,3,4,5-tetrahydrodipicolinate + NADH + H(+). The enzyme catalyses (S)-2,3,4,5-tetrahydrodipicolinate + NADP(+) + H2O = (2S,4S)-4-hydroxy-2,3,4,5-tetrahydrodipicolinate + NADPH + H(+). It participates in amino-acid biosynthesis; L-lysine biosynthesis via DAP pathway; (S)-tetrahydrodipicolinate from L-aspartate: step 4/4. Functionally, catalyzes the conversion of 4-hydroxy-tetrahydrodipicolinate (HTPA) to tetrahydrodipicolinate. This is 4-hydroxy-tetrahydrodipicolinate reductase from Salmonella paratyphi A (strain ATCC 9150 / SARB42).